Reading from the N-terminus, the 424-residue chain is Histidine--tRNA ligase (424 aa).

Belongs to the class-II aminoacyl-tRNA synthetase family. In terms of assembly, homodimer.

It localises to the cytoplasm. The catalysed reaction is tRNA(His) + L-histidine + ATP = L-histidyl-tRNA(His) + AMP + diphosphate + H(+). The chain is Histidine--tRNA ligase from Shewanella amazonensis (strain ATCC BAA-1098 / SB2B).